The chain runs to 359 residues: 3-dehydroquinate synthase (359 aa).

Residues aspartate 71–lysine 76, glycine 105–aspartate 109, threonine 129–threonine 130, lysine 142, and lysine 151 each bind NAD(+). Residues glutamate 184, histidine 247, and histidine 264 each contribute to the Zn(2+) site.

It belongs to the sugar phosphate cyclases superfamily. Dehydroquinate synthase family. It depends on Co(2+) as a cofactor. Zn(2+) serves as cofactor. The cofactor is NAD(+).

The protein localises to the cytoplasm. It catalyses the reaction 7-phospho-2-dehydro-3-deoxy-D-arabino-heptonate = 3-dehydroquinate + phosphate. The protein operates within metabolic intermediate biosynthesis; chorismate biosynthesis; chorismate from D-erythrose 4-phosphate and phosphoenolpyruvate: step 2/7. Catalyzes the conversion of 3-deoxy-D-arabino-heptulosonate 7-phosphate (DAHP) to dehydroquinate (DHQ). The sequence is that of 3-dehydroquinate synthase from Burkholderia lata (strain ATCC 17760 / DSM 23089 / LMG 22485 / NCIMB 9086 / R18194 / 383).